Consider the following 230-residue polypeptide: Heptaprenylglyceryl phosphate synthase (230 aa).

Lys-12 is a sn-glycerol 1-phosphate binding site. Mg(2+)-binding residues include Asp-14 and Thr-40. Residues 159 to 164 (YIEYSG), Gly-189, and 209 to 210 (GD) contribute to the sn-glycerol 1-phosphate site.

The protein belongs to the GGGP/HepGP synthase family. Group I subfamily. As to quaternary structure, homodimer. Requires Mg(2+) as cofactor.

It catalyses the reaction sn-glycerol 1-phosphate + all-trans-heptaprenyl diphosphate = 3-heptaprenyl-sn-glycero-1-phosphate + diphosphate. Its pathway is membrane lipid metabolism; glycerophospholipid metabolism. Prenyltransferase that catalyzes in vivo the transfer of the heptaprenyl moiety of heptaprenyl pyrophosphate (HepPP; 35 carbon atoms) to the C3 hydroxyl of sn-glycerol-1-phosphate (G1P), producing heptaprenylglyceryl phosphate (HepGP). This reaction is an ether-bond-formation step in the biosynthesis of archaea-type G1P-based membrane lipids found in Bacillales. This is Heptaprenylglyceryl phosphate synthase from Staphylococcus aureus (strain JH1).